We begin with the raw amino-acid sequence, 345 residues long: Protein phosphatase 1 regulatory subunit 7 (345 aa).

The interval 1 to 53 (MATLSVGEPQEMEVDRRGESEESGDDETKRKSLNGEVDSLQAPSTVPEESPVD) is disordered. Residues 13-30 (EVDRRGESEESGDDETKR) show a composition bias toward basic and acidic residues. 11 LRR repeats span residues 62 to 83 (EEED…EVLL), 84 to 105 (KAKT…ESLV), 106 to 127 (SLRE…QALT), 128 to 149 (ELEQ…DSLT), 150 to 171 (KVKK…DHLT), 172 to 193 (SLQM…DSLS), 194 to 215 (SLES…DGLH), 216 to 237 (NLTV…QNLV), 238 to 259 (NLRE…ENNK), 260 to 281 (KLST…SHLT), and 282 to 303 (DLKE…DELK). Residues 316–345 (NPLQKDPQYRRKIMLALPSVRQIDATFIRF) enclose the LRRCT domain.

The protein belongs to the SDS22 family.

The protein resides in the nucleus. Regulatory subunit of protein phosphatase 1. The chain is Protein phosphatase 1 regulatory subunit 7 (ppp1r7) from Danio rerio (Zebrafish).